Here is a 165-residue protein sequence, read N- to C-terminus: Choriogonadotropin subunit beta 7 (165 aa).

An N-terminal signal peptide occupies residues 1–20 (MEMFQGLLLLLLLSMGGTWA). 6 disulfides stabilise this stretch: C29-C77, C43-C92, C46-C130, C54-C108, C58-C110, and C113-C120. N-linked (GlcNAc...) asparagine glycans are attached at residues N33 and N50. Residues 131–165 (DDPRFQASSSSKAPPPSLPSPSRLPGPSDTPILPQ) are disordered. S141, S147, S152, and S158 each carry an O-linked (GalNAc...) serine glycan. Residues 143–154 (APPPSLPSPSRL) show a composition bias toward pro residues.

Belongs to the glycoprotein hormones subunit beta family. As to quaternary structure, heterodimer of a common alpha chain identical in LH, FSH, TSH and HCG and a unique beta chain distinct in each of the hormones and confers receptor and biological specificity. As to expression, high expression in the placenta throughout pregnancy.

The protein localises to the secreted. Beta subunit of the human chorionic gonadotropin (hCG). hCG is a complex glycoprotein composed of two glycosylated subunits alpha and beta which are non-covalently associated. The alpha subunit is identical to those in the pituitary gonadotropin hormones (LH, FSH and TSH). The beta subunits are distinct in each of the hormones and confer receptor and biological specificity. Has an essential role for pregnancy and maternal adaptation. Stimulates the ovaries to synthesize the steroids that are essential for the maintenance of pregnancy. The protein is Choriogonadotropin subunit beta 7 of Homo sapiens (Human).